A 154-amino-acid chain; its full sequence is Superoxide dismutase [Cu-Zn] (154 aa).

Cu cation-binding residues include His47, His49, and His64. Cys58 and Cys147 are disulfide-bonded. 4 residues coordinate Zn(2+): His64, His72, His81, and Asp84. Cu cation is bound at residue His121. Residues 125–137 (DDLGRGGNEESKK) are compositionally biased toward basic and acidic residues. Positions 125–147 (DDLGRGGNEESKKTGNAGPRPAC) are disordered. Arg144 is a substrate binding site.

Homodimer. Requires Cu cation as cofactor. Zn(2+) serves as cofactor.

The protein resides in the cytoplasm. The catalysed reaction is 2 superoxide + 2 H(+) = H2O2 + O2. Destroys radicals which are normally produced within the cells and which are toxic to biological systems. This is Superoxide dismutase [Cu-Zn] from Aspergillus niger.